A 182-amino-acid chain; its full sequence is Adenylate kinase (182 aa).

12 to 17 serves as a coordination point for ATP; it reads GAGKGT. The interval 32-61 is NMP; the sequence is STGDLLREEVSGGTDLGKKAELIMNKGELV. Residues Thr33, Arg38, 59–61, 85–88, and Gln92 contribute to the AMP site; these read ELV and GFPR. An LID region spans residues 126–132; the sequence is GRGRKDD. Arg127 is a binding site for ATP. Arg129 and Arg140 together coordinate AMP. Gly168 is an ATP binding site.

This sequence belongs to the adenylate kinase family. As to quaternary structure, monomer.

It localises to the cytoplasm. The enzyme catalyses AMP + ATP = 2 ADP. Its pathway is purine metabolism; AMP biosynthesis via salvage pathway; AMP from ADP: step 1/1. Its function is as follows. Catalyzes the reversible transfer of the terminal phosphate group between ATP and AMP. Plays an important role in cellular energy homeostasis and in adenine nucleotide metabolism. This is Adenylate kinase from Prochlorococcus marinus (strain SARG / CCMP1375 / SS120).